Here is a 161-residue protein sequence, read N- to C-terminus: 2-C-methyl-D-erythritol 2,4-cyclodiphosphate synthase (161 aa).

A divalent metal cation-binding residues include D11 and H13. 4-CDP-2-C-methyl-D-erythritol 2-phosphate contacts are provided by residues 11–13 (DIH) and 37–38 (HS). H45 contacts a divalent metal cation. Residues 59–61 (DIG), 135–138 (TTNE), and R145 each bind 4-CDP-2-C-methyl-D-erythritol 2-phosphate.

The protein belongs to the IspF family. Homotrimer. The cofactor is a divalent metal cation.

It catalyses the reaction 4-CDP-2-C-methyl-D-erythritol 2-phosphate = 2-C-methyl-D-erythritol 2,4-cyclic diphosphate + CMP. It functions in the pathway isoprenoid biosynthesis; isopentenyl diphosphate biosynthesis via DXP pathway; isopentenyl diphosphate from 1-deoxy-D-xylulose 5-phosphate: step 4/6. Involved in the biosynthesis of isopentenyl diphosphate (IPP) and dimethylallyl diphosphate (DMAPP), two major building blocks of isoprenoid compounds. Catalyzes the conversion of 4-diphosphocytidyl-2-C-methyl-D-erythritol 2-phosphate (CDP-ME2P) to 2-C-methyl-D-erythritol 2,4-cyclodiphosphate (ME-CPP) with a corresponding release of cytidine 5-monophosphate (CMP). This Synechocystis sp. (strain ATCC 27184 / PCC 6803 / Kazusa) protein is 2-C-methyl-D-erythritol 2,4-cyclodiphosphate synthase.